We begin with the raw amino-acid sequence, 293 residues long: Putative ribose uptake protein RbsU (293 aa).

Helical transmembrane passes span Ser2 to Ser24, Ile34 to Phe56, Leu63 to Phe80, Thr95 to Ile117, Ile122 to Trp139, Ala154 to Ala171, Leu180 to Met202, Ile212 to Ala234, Leu241 to Leu263, and Val273 to Ile292.

Belongs to the GRP transporter (TC 2.A.7.5) family.

It localises to the cell membrane. Its function is as follows. Could be involved in the uptake of ribose. The sequence is that of Putative ribose uptake protein RbsU (rbsU) from Staphylococcus aureus (strain Mu50 / ATCC 700699).